Here is a 342-residue protein sequence, read N- to C-terminus: Putative ABC transporter anion-binding protein HVO_1888 (342 aa).

A signal peptide (tat-type signal) is located at residues 1 to 32 (MAIERRRFLQAAGVGAVLGLSGCTGNTSPPQA). Over residues 24-37 (TGNTSPPQANNETA) the composition is skewed to polar residues. The tract at residues 24–52 (TGNTSPPQANNETAEGSGGSESGDGSTQE) is disordered.

The complex is composed of two ATP-binding proteins (HVO_1886), two transmembrane proteins (HVO_1887) and a solute-binding protein (HVO_1888). In terms of processing, predicted to be exported by the Tat system. The position of the signal peptide cleavage has not been experimentally proven.

In terms of biological role, part of an ABC transporter complex involved in anions import. This Haloferax volcanii (strain ATCC 29605 / DSM 3757 / JCM 8879 / NBRC 14742 / NCIMB 2012 / VKM B-1768 / DS2) (Halobacterium volcanii) protein is Putative ABC transporter anion-binding protein HVO_1888.